The following is an 846-amino-acid chain: MSTAAGSRKKHSKLHNEERADITKDEFEAIREALSKEEFRKLFFDYVEEVQDPENRKIYEQEITQLEKERGVDIKFVHPKPGFVVKTSIDGELKCFINIASSPEVARPNSEVGMNPETGGRGLSWSIPMAQTGGRDDCDAKNNHCKVFDVVFHPDALHLSTRDSQFRKALIDTALDAVEREYEVALDRANLKYPKLDYKGIARPTVIRKLAANPTPEEQEPHPLEHMYPTKPPASNSEPKILPMKTKAAPVPEFAVPKYSIKQSHDVDLSEYTDELDAKLHVTVPRSLVVEIELPLLRSTAECQLDVTAKSVYLLSERLGAKYRLKLDLPFVVDDKAGNARFDTEKRRLSITLPVVRKSVNQQRQMHDTLRYLSREDSGVELHSNSESPVEDDADGYMPETPELETAAPPDPPALTPSTFLKDSVHYQLPKFDCNALDNAMAFVLDVAHVQPDSIVTLKTDRSVSVKFATIGSGYYPTHYAFYMELPSVDMEEYHKDHCIESIEAEAWDNNVIMKLFLGAESKAPTSYLAGLHANGLKEYQVYGHYKAKTDKNNECEPNPPRDVQIMRTDDAVVITVRPPHTSITTEEDDEQQQQLHKKPSKKQRKRNKKQRSYSESACEEMLDQQDGPLGRKKDATTPMVPQRKQRSYSECNDSTIGSENVNRGILKRFSRYGPRPSMSDSCSSIDDCGFSSHSCSVDASSSLFSQSFNGIPEEDRTEEGLSESCKKTVRFNDQIMKQVFRHDSSILGQRKKNQKRRNCKLRAQQRRLSEGDSADYEETRDTALKQQGEPSGNKLHDSGLDLTGASASHRTDNNSKSYRTRQDHADADAKNDAMMFEMDDEDDEI.

Disordered regions lie at residues 1–21 (MSTA…ERAD), 377–412 (DSGV…PPDP), 581–657 (HTSI…DSTI), and 743–846 (HDSS…DDEI). Position 378 is a phosphoserine (S378). The span at 399-408 (PETPELETAA) shows a compositional bias: low complexity. Composition is skewed to basic residues over residues 596–612 (LHKK…KKQR) and 750–766 (QRKK…RAQQ). S770 carries the phosphoserine modification. Basic and acidic residues predominate over residues 821 to 832 (TRQDHADADAKN).

This sequence belongs to the PIH1 family. Kintoun subfamily. As to quaternary structure, interacts with Pp1alpha-96A, Pp1-87B, Pp1-13C and flw.

The protein resides in the cytoplasm. Functionally, required for cytoplasmic pre-assembly of axonemal dyneins, thereby playing a central role in motility in cilia and flagella. Involved in pre-assembly of dynein arm complexes in the cytoplasm before intraflagellar transport loads them for the ciliary compartment. The protein is Protein kintoun of Drosophila pseudoobscura pseudoobscura (Fruit fly).